The sequence spans 216 residues: Octanoyltransferase (216 aa).

The BPL/LPL catalytic domain maps to Ser-31 to Gln-205. Substrate contacts are provided by residues Arg-70–His-77, Ser-137–Gly-139, and Gly-150–Ala-152. The Acyl-thioester intermediate role is filled by Cys-168.

This sequence belongs to the LipB family.

The protein resides in the cytoplasm. It catalyses the reaction octanoyl-[ACP] + L-lysyl-[protein] = N(6)-octanoyl-L-lysyl-[protein] + holo-[ACP] + H(+). The protein operates within protein modification; protein lipoylation via endogenous pathway; protein N(6)-(lipoyl)lysine from octanoyl-[acyl-carrier-protein]: step 1/2. In terms of biological role, catalyzes the transfer of endogenously produced octanoic acid from octanoyl-acyl-carrier-protein onto the lipoyl domains of lipoate-dependent enzymes. Lipoyl-ACP can also act as a substrate although octanoyl-ACP is likely to be the physiological substrate. The chain is Octanoyltransferase from Vibrio cholerae serotype O1 (strain ATCC 39315 / El Tor Inaba N16961).